Consider the following 269-residue polypeptide: Eukaryotic translation initiation factor 3 subunit G-2 (269 aa).

Residues 189–267 (SAVRISNLSE…LILCVEWSKP (79 aa)) form the RRM domain.

It belongs to the eIF-3 subunit G family. Component of the eukaryotic translation initiation factor 3 (eIF-3) complex. The eIF-3 complex interacts with pix.

The protein localises to the cytoplasm. In terms of biological role, RNA-binding component of the eukaryotic translation initiation factor 3 (eIF-3) complex, which is involved in protein synthesis of a specialized repertoire of mRNAs and, together with other initiation factors, stimulates binding of mRNA and methionyl-tRNAi to the 40S ribosome. The eIF-3 complex specifically targets and initiates translation of a subset of mRNAs involved in cell proliferation. This subunit can bind 18S rRNA. In Drosophila ananassae (Fruit fly), this protein is Eukaryotic translation initiation factor 3 subunit G-2.